Reading from the N-terminus, the 339-residue chain is Dihydroorotate dehydrogenase (quinone) (339 aa).

Residues 61–65 (AGLDK) and T85 each bind FMN. Residue K65 coordinates substrate. 110–114 (NRMGF) is a substrate binding site. N138 and N171 together coordinate FMN. N171 contributes to the substrate binding site. Residue S174 is the Nucleophile of the active site. A substrate-binding site is contributed by N176. FMN contacts are provided by K216 and T244. A substrate-binding site is contributed by 245–246 (NT). FMN contacts are provided by residues G267, G296, and 317-318 (YS).

Belongs to the dihydroorotate dehydrogenase family. Type 2 subfamily. As to quaternary structure, monomer. Requires FMN as cofactor.

It localises to the cell membrane. It catalyses the reaction (S)-dihydroorotate + a quinone = orotate + a quinol. The protein operates within pyrimidine metabolism; UMP biosynthesis via de novo pathway; orotate from (S)-dihydroorotate (quinone route): step 1/1. Its function is as follows. Catalyzes the conversion of dihydroorotate to orotate with quinone as electron acceptor. The chain is Dihydroorotate dehydrogenase (quinone) from Saccharophagus degradans (strain 2-40 / ATCC 43961 / DSM 17024).